The primary structure comprises 698 residues: Colicin V secretion/processing ATP-binding protein CvaB (698 aa).

One can recognise a Peptidase C39 domain in the interval 26-145 (QTETAECGLA…RYFTGVALEV (120 aa)). C32 is a catalytic residue. Helical transmembrane passes span 33 to 53 (GLAC…LIYL), 92 to 112 (VLKT…LVSV), 176 to 196 (LAKI…MPVG), 211 to 231 (GLLT…AATS), 289 to 311 (TSVI…MLLY), 315 to 334 (LTWI…LVTY), and 412 to 432 (IVIL…IGMF). Positions 176–458 (LAKIFCLSVV…LTSFLLQLRI (283 aa)) constitute an ABC transmembrane type-1 domain. The region spanning 492–698 (LETNGLSYRY…LRTVDRVISI (207 aa)) is the ABC transporter domain. Residue 526–533 (GASGAGKT) coordinates ATP.

This sequence belongs to the ABC transporter superfamily. Colicin V exporter (TC 3.A.1.110.2) family.

It localises to the cell membrane. Involved, in conjunction with CvaA, in the secretion of colicin V. In Escherichia coli, this protein is Colicin V secretion/processing ATP-binding protein CvaB (cvaB).